The chain runs to 178 residues: Mediator of RNA polymerase II transcription subunit 31 (178 aa).

Residues 129–140 (EGQELEESEDEA) are compositionally biased toward acidic residues. Positions 129–178 (EGQELEESEDEADIRQKDTEDEDDEETMKKPDADTAEKNSTTSTVSKKEK) are disordered. Residues 155–165 (TMKKPDADTAE) are compositionally biased toward basic and acidic residues. The segment covering 166-178 (KNSTTSTVSKKEK) has biased composition (polar residues).

It belongs to the Mediator complex subunit 31 family. In terms of assembly, component of the Mediator complex.

It is found in the nucleus. Component of the Mediator complex, a coactivator involved in the regulated transcription of nearly all RNA polymerase II-dependent genes. Mediator functions as a bridge to convey information from gene-specific regulatory proteins to the basal RNA polymerase II transcription machinery. Mediator is recruited to promoters by direct interactions with regulatory proteins and serves as a scaffold for the assembly of a functional preinitiation complex with RNA polymerase II and the general transcription factors. This Caenorhabditis elegans protein is Mediator of RNA polymerase II transcription subunit 31.